We begin with the raw amino-acid sequence, 370 residues long: Histidinol-phosphate aminotransferase 1 (370 aa).

Lysine 229 bears the N6-(pyridoxal phosphate)lysine mark.

It belongs to the class-II pyridoxal-phosphate-dependent aminotransferase family. Histidinol-phosphate aminotransferase subfamily. Homodimer. Pyridoxal 5'-phosphate is required as a cofactor.

The catalysed reaction is L-histidinol phosphate + 2-oxoglutarate = 3-(imidazol-4-yl)-2-oxopropyl phosphate + L-glutamate. It participates in amino-acid biosynthesis; L-histidine biosynthesis; L-histidine from 5-phospho-alpha-D-ribose 1-diphosphate: step 7/9. The polypeptide is Histidinol-phosphate aminotransferase 1 (Nitrosococcus oceani (strain ATCC 19707 / BCRC 17464 / JCM 30415 / NCIMB 11848 / C-107)).